Here is a 296-residue protein sequence, read N- to C-terminus: SHSP domain-containing protein CPUR_05420 (296 aa).

Residues 50-83 (AWQTCPQQRHPHQPDVSGPPGSGFGEQPSQDTPN) form a disordered region. Residues 169–296 (ETKKSFTPDI…GKGVKEITIV (128 aa)) enclose the sHSP domain.

The protein belongs to the small heat shock protein (HSP20) family.

Monooxygenase; part of the ergochrome gene cluster responsible for the typical purple-black color of the ergot sclerotia. The ergochrome gene cluster produces several ergot pigments including the yellow ergochrome secalonic acid and its derivatives, as well as the red anthraquinones endocrocin and clavorubin. The pathway begins with the synthesis of atrochrysone thioester by the polyketide synthase (PKS) CPUR_05437. The atrochrysone carboxyl ACP thioesterase CPUR_05436 then breaks the thioester bond and releases the atrochrysone carboxylic acid from CPUR_05437. The atrochrysone carboxylic acid is then converted to atrochrysone which is further transformed into emodin anthrone. The next step is performed by the anthrone oxygenase CPUR_05434 that catalyzes the oxidation of emodinanthrone to emodin. Emodin is further modified to yield monodictyphenone via several steps involving CPUR_05427, CPUR_05428, CPUR_05429 and CPUR_05430. The short chain dehydrogenase/reductase CPUR_05418 then catalyzes the C-5 ketoreduction to give the xanthone skeleton of the monomeric units. Ergochromes formation requires further dimerization steps of different xanthone units, probably catalyzed by the cytochrome P450 monooxygenase CPUR_05419. CPUR_05425, CPUR_05426 and CPUR_05431 are unique to Claviceps, thus it is likely that they are involved in further modification of xanthone units or in their dimerization. The yellow ergochromes and the red anthraquinone pigments endocrocin and clavorubin are products from the same PKS derived precursors and the latter are likely shunt products in the pathway of xanthone biosynthesis. It is proposed that atrochrysone carboxylic acid released from the PKS CPUR_05437 can also be converted to endocrocin anthrone which is further oxidized into endocrocin by CPUR_05435. Endocrocin could be then modified to clavorubin, possibly by CPUR_05423 and CPUR_05431. Clavorubin is the principal anthraquinone metabolite produced by the cluster with a much higher yield compared to endocrocin. The protein is SHSP domain-containing protein CPUR_05420 of Claviceps purpurea (strain 20.1) (Ergot fungus).